The sequence spans 629 residues: MNTSDHPAPAAYDVIVVGGGHAGCEAAAAAARTGAITALVTHQAATIGEMSCNPAIGGIGKGHLVREIDALDGLMGRAIDQACIHFKMLNRSKGPAVRGPRAQADRKLYKKAVQDILHTTPHLSIIEGSVEDLITSSGTQQTVQGVILQDGRHLSASAVVLTTGTFLRGVIHCGEQRSEAGRVGEAPSIGLAKRLDALNLRMGRLKTGTPPRIDRRSIAWEDLPEDRGENPPTPFSTLNHHIDLPQISCRISETTADTHQIIRDNLHRSAVYGGMLSGKGPRYCPSIEDKVVRFPDKTRHQVFLEPEGLDDFTVYPNGISTSLPAEVQEALLHSMPGLHNAVIIRPGYAVEYDFVDPRSLRPSLELKELPGLFLAGQINGTTGYEEAGAQGLMAGLNAARKAQGLDSVTLDRSQAYIGVLIDDLTTHGVTEPYRMFTSRSEFRLTLRADNADRRLTRWGRQAGCVSDERWKTFAAYDQAMNDALTLAAQDTRTPVQLQQVGITVRQDGRRRPLLSLIGSDPEQDQKLNQAFPWLHDLDPRVREQLEIEGAYSGYLSRQDKERRVLQQEDTILLSDHIDYSAIGGLSAEIRDKLQSLRPTSLGAASRMEGMTPAALAAISHFVRRKQCFT.

FAD contacts are provided by residues 18-23 (GGGHAG), Val130, and Ser188. 280 to 294 (GPRYCPSIEDKVVRF) contributes to the NAD(+) binding site. Gln377 serves as a coordination point for FAD.

It belongs to the MnmG family. Homodimer. Heterotetramer of two MnmE and two MnmG subunits. Requires FAD as cofactor.

It localises to the cytoplasm. Its function is as follows. NAD-binding protein involved in the addition of a carboxymethylaminomethyl (cmnm) group at the wobble position (U34) of certain tRNAs, forming tRNA-cmnm(5)s(2)U34. The polypeptide is tRNA uridine 5-carboxymethylaminomethyl modification enzyme MnmG (Granulibacter bethesdensis (strain ATCC BAA-1260 / CGDNIH1)).